An 872-amino-acid chain; its full sequence is Valine--tRNA ligase (872 aa).

The 'HIGH' region motif lies at 45–55 (PYPTGNLHIGN). The 'KMSKS' region signature appears at 524–528 (KMSKS). Position 527 (lysine 527) interacts with ATP.

The protein belongs to the class-I aminoacyl-tRNA synthetase family. ValS type 2 subfamily.

Its subcellular location is the cytoplasm. The catalysed reaction is tRNA(Val) + L-valine + ATP = L-valyl-tRNA(Val) + AMP + diphosphate. Its function is as follows. Catalyzes the attachment of valine to tRNA(Val). As ValRS can inadvertently accommodate and process structurally similar amino acids such as threonine, to avoid such errors, it has a 'posttransfer' editing activity that hydrolyzes mischarged Thr-tRNA(Val) in a tRNA-dependent manner. The sequence is that of Valine--tRNA ligase from Natronomonas pharaonis (strain ATCC 35678 / DSM 2160 / CIP 103997 / JCM 8858 / NBRC 14720 / NCIMB 2260 / Gabara) (Halobacterium pharaonis).